The primary structure comprises 913 residues: Eukaryotic translation initiation factor 3 subunit C (913 aa).

The disordered stretch occupies residues 1-22 (MSRFFANGSDSESESSEEEVQA). Positions 11-20 (SESESSEEEV) are enriched in acidic residues. Residues serine 34, serine 165, serine 177, and serine 186 each carry the phosphoserine modification. A disordered region spans residues 157 to 285 (FREAPDQESD…KRAEDDEDGE (129 aa)). The segment covering 162–171 (DQESDVEEGE) has biased composition (acidic residues). Residues 172–184 (GEPHDSDGDRAGA) show a composition bias toward basic and acidic residues. Residues 214 to 239 (DEDDSDDSIDWDSDTESETESSEDEN) are compositionally biased toward acidic residues. Residues 244–263 (MRERFLKRTTEKEDKDDDKR) are compositionally biased toward basic and acidic residues. Basic residues predominate over residues 264–276 (KDKRKEQKHKVRK). Residues 645–821 (FHMHINLELL…ETVVMHRSEP (177 aa)) enclose the PCI domain. The disordered stretch occupies residues 856–913 (RGNMGNRDRGYNRNQNNQGGNWGGQRRDNRNQRNRNQRGHHKQQQQQQQQQVQTIEEE). Residues 887–898 (QRNRNQRGHHKQ) show a composition bias toward basic residues.

Belongs to the eIF-3 subunit C family. In terms of assembly, component of the eukaryotic translation initiation factor 3 (eIF-3) complex. The eIF-3 complex interacts with pix.

The protein localises to the cytoplasm. In terms of biological role, component of the eukaryotic translation initiation factor 3 (eIF-3) complex, which is involved in protein synthesis of a specialized repertoire of mRNAs and, together with other initiation factors, stimulates binding of mRNA and methionyl-tRNAi to the 40S ribosome. The eIF-3 complex specifically targets and initiates translation of a subset of mRNAs involved in cell proliferation. The chain is Eukaryotic translation initiation factor 3 subunit C from Drosophila mojavensis (Fruit fly).